The primary structure comprises 329 residues: CDP-diacylglycerol--glycerol-3-phosphate 3-phosphatidyltransferase 1, chloroplastic (329 aa).

The transit peptide at 1-38 directs the protein to the chloroplast; the sequence is MAFLKTLNPLLRRSPTPIPNPRSLLSLDAFLAASSPTA. 4 consecutive transmembrane segments (helical) span residues 150–170, 190–210, 217–237, and 300–320; these read PVIG…TLAL, VFGS…VAIA, LHPG…GGAV, and ITVL…GYGI.

This sequence belongs to the CDP-alcohol phosphatidyltransferase class-I family. Requires Mn(2+) as cofactor.

The protein resides in the plastid. It localises to the chloroplast membrane. It carries out the reaction a CDP-1,2-diacyl-sn-glycerol + sn-glycerol 3-phosphate = a 1,2-diacyl-sn-glycero-3-phospho-(1'-sn-glycero-3'-phosphate) + CMP + H(+). It functions in the pathway phospholipid metabolism; phosphatidylglycerol biosynthesis; phosphatidylglycerol from CDP-diacylglycerol: step 1/2. In terms of biological role, catalyzes the committed step to the synthesis of the acidic phospholipids. Transfers specifically a phosphatidyl group from CDP-diacylglycerol to glycerol-3-phosphate to form phosphatidylglycerophosphate. The chain is CDP-diacylglycerol--glycerol-3-phosphate 3-phosphatidyltransferase 1, chloroplastic from Oryza sativa subsp. japonica (Rice).